A 461-amino-acid polypeptide reads, in one-letter code: Cytochrome c biogenesis protein CcsB (461 aa).

The next 3 helical transmembrane spans lie at 32–52 (LRLAIALLLIIALFSISGTVI), 91–111 (TWWFLSLLVLFGTSLTACTFT), and 178–198 (IGPIIVHIGIVTILLGSIWGA).

The protein belongs to the Ccs1/CcsB family. May interact with CcsA.

The protein resides in the cellular thylakoid membrane. Its function is as follows. Required during biogenesis of c-type cytochromes (cytochrome c6 and cytochrome f) at the step of heme attachment. This Nostoc sp. (strain PCC 7120 / SAG 25.82 / UTEX 2576) protein is Cytochrome c biogenesis protein CcsB.